Consider the following 3841-residue polypeptide: Transformation/transcription domain-associated protein (3841 aa).

Disordered stretches follow at residues 491-516 (TPTV…PPAT) and 2002-2027 (QQPE…MKRG). A compositionally biased stretch (pro residues) spans 498–515 (ALPPPAPPTPVTPAPPPA). The Bipartite nuclear localization signal motif lies at 2025–2040 (KRGMSVDSAQDVKRFR). One can recognise an FAT domain in the interval 2671-3239 (VLKYLGKTHN…YFPIRTLYLT (569 aa)). Positions 3249 to 3271 (KSDSGQQQPSSAAAQTHSASDPG) are disordered. Over residues 3251–3268 (DSGQQQPSSAAAQTHSAS) the composition is skewed to low complexity. Positions 3482–3805 (MPRVEIVQKH…AVTAIMTRLH (324 aa)) constitute a PI3K/PI4K catalytic domain. The interval 3488-3494 (VQKHNTA) is G-loop. The segment at 3669 to 3677 (HLNRLNPEM) is catalytic loop. The segment at 3689 to 3714 (VSYFRFDINDATGDLDANRPVPFRLT) is activation loop. The region spanning 3809–3841 (QFEGGESKVNTLVAAANSLDNLCRMDPAWHPWL) is the FATC domain.

It belongs to the PI3/PI4-kinase family. TRA1 subfamily.

The protein resides in the nucleus. Adapter protein, which is found in various multiprotein chromatin complexes with histone acetyltransferase activity (HAT), which gives a specific tag for epigenetic transcription activation. May be required for the mitotic checkpoint and normal cell cycle progression. May play a role in the formation and maintenance of the auditory system. This is Transformation/transcription domain-associated protein from Danio rerio (Zebrafish).